The following is a 1948-amino-acid chain: [F-actin]-monooxygenase MICAL2 (1948 aa).

The segment at 2–494 (GENEDEKQAQ…KHLYITKEMD (493 aa)) is monooxygenase domain. Residues Cys97, 116–118 (EKR), 123–125 (RNN), Phe183, Tyr298, and Asp398 each bind FAD. The 104-residue stretch at 516 to 619 (DIRPNKLLTW…MVMYLSKFYE (104 aa)) folds into the Calponin-homology (CH) domain. Ser631 carries the phosphoserine modification. The Nuclear localization signal motif lies at 660–681 (RKRTPRVDAQTEENDVNKRRRQ). Disordered regions lie at residues 664–709 (PRVD…ESGN), 753–776 (SRPPGTSHCPKLEESTPRLPPPLK), and 891–923 (KRVPHAHPPSPPSCLPSPDPAAAPSPPAADSVS). A compositionally biased stretch (polar residues) spans 693–709 (SSRSLGSSQEYAKESGN). Residues 896–917 (AHPPSPPSCLPSPDPAAAPSPP) show a composition bias toward pro residues. In terms of domain architecture, LIM zinc-binding spans 980 to 1042 (DTCYFCKKRV…KLHFAHCKTS (63 aa)). Zn(2+) contacts are provided by Cys982, Cys985, His1003, Cys1006, Cys1009, Cys1012, Cys1032, and His1035. Disordered regions lie at residues 1045 to 1134 (QRKR…GQDG), 1146 to 1185 (SEDSSSDTESDSGSIIGPCTEACEERPRLPESPPLSQPLT), and 1233 to 1298 (QSNS…DDVS). Residues 1050 to 1059 (AELNQQREEE) are compositionally biased toward basic and acidic residues. The segment covering 1233 to 1243 (QSNSTPMNQRA) has biased composition (polar residues). Over residues 1254-1271 (SSSSSPSLPSSFSSASVP) the composition is skewed to low complexity. Over residues 1277–1292 (DSSSPQVTYNLHSPQI) the composition is skewed to polar residues. Residues 1300–1339 (TPIYLRRARAQGITKEIPLYLPHSPMLESTEHCLVSPDGE) form an interaction with MAPK1 region. Disordered stretches follow at residues 1478-1505 (QKKALGETRTPAAKAPREREVPPPKSPL), 1519-1622 (SSEA…SSKV), 1672-1726 (GDFF…QAGK), and 1739-1767 (SGPGAPVTEDTSSPTSSSAEEDVETQLSS). Residues 1522–1534 (AGKKTSSKPETKT) show a composition bias toward basic and acidic residues. The segment covering 1570-1579 (KASAFFSLAS) has biased composition (low complexity). Residues 1580 to 1591 (PTSKAAQASDLS) show a composition bias toward polar residues. Residues 1672–1682 (GDFFNSPKEKG) are compositionally biased toward basic and acidic residues. Ser1677 is subject to Phosphoserine. Polar residues-rich tracts occupy residues 1698 to 1715 (VDSTSMGQVAHPSSTGQD) and 1747 to 1756 (EDTSSPTSSS). The 151-residue stretch at 1786–1936 (KQEELKRLHK…ERTQDQHFEN (151 aa)) folds into the bMERB domain.

The protein belongs to the Mical family. As to quaternary structure, interacts with PLXNA4. Interacts with RAB1B. Interacts with MAPK1/ERK2. Interacts with RAB35, RAB8A, RAB10, RAB13 and RAB15 (in their GTP-bound forms); binding to RAB35 is of low affinity compared to other Rab proteins; at least in case of RAB8A may bind 2 molecules of RAB8A simultaneously through a high and a low affinity binding site, respectively. May interact with MAPK1/ERK2. The cofactor is FAD.

Its subcellular location is the nucleus. The protein localises to the cytoplasm. It catalyses the reaction L-methionyl-[F-actin] + NADPH + O2 + H(+) = L-methionyl-(R)-S-oxide-[F-actin] + NADP(+) + H2O. Methionine monooxygenase that promotes depolymerization of F-actin by mediating oxidation of residues 'Met-44' and 'Met-47' on actin to form methionine-sulfoxide, resulting in actin filament disassembly and preventing repolymerization. Regulates the disassembly of branched actin networks also by oxidizing ARP3B-containing ARP2/3 complexes leading to ARP3B dissociation from the network. Acts as a key regulator of the SRF signaling pathway elicited by nerve growth factor and serum: mediates oxidation and subsequent depolymerization of nuclear actin, leading to increase MKL1/MRTF-A presence in the nucleus and promote SRF:MKL1/MRTF-A-dependent gene transcription. Does not activate SRF:MKL1/MRTF-A through RhoA. This Rattus norvegicus (Rat) protein is [F-actin]-monooxygenase MICAL2.